The sequence spans 527 residues: Glucose-6-phosphate isomerase (527 aa).

Glu-323 (proton donor) is an active-site residue. Catalysis depends on residues His-352 and Lys-454.

The protein belongs to the GPI family.

It localises to the cytoplasm. The enzyme catalyses alpha-D-glucose 6-phosphate = beta-D-fructose 6-phosphate. Its pathway is carbohydrate biosynthesis; gluconeogenesis. It functions in the pathway carbohydrate degradation; glycolysis; D-glyceraldehyde 3-phosphate and glycerone phosphate from D-glucose: step 2/4. Functionally, catalyzes the reversible isomerization of glucose-6-phosphate to fructose-6-phosphate. The protein is Glucose-6-phosphate isomerase of Prochlorococcus marinus (strain MIT 9301).